A 129-amino-acid chain; its full sequence is MSSVTIGKCYIQNRENGGRAFYNLGRKDLGIFTGKMYDDQIWSFQKSDTPGYYTIGRESKFLQYNGEQVIMSDIEQDTTLWSLEEVPEDKGFYRLLNKVHKAYLDYNGGDLVANKHQTESEKWILFKAY.

A carbohydrate is bound by residues 21-23 (FYN), 26-28 (RKD), Phe32, and 37-40 (YDDQ).

As to quaternary structure, homodimer. As to expression, highest expression in the outer part of the mantle rim. Highly expressed in gills, with a much lower expression in the digestive gland and posterior adductor muscle. Scarcely detectable in foot.

With respect to regulation, hemagglutination activity requires divalent cations such as Ca(2+). Hemagglutination activity is weakly inhibited by monosaccharides such as D-Gal (25 mM), D-GalNAc (25 mM) and D-Fuc (25 mM) and by disaccharides such as melibiose (25 mM) and lactose (25 mM). Hemagglutination activity is inhibited by bovine submaxillary mucin, but not by porcine stomach mucin or fetuin. In terms of biological role, galbeta1-3GalNAcbeta1-4Galbeta1-4Glc oligosaccharide-binding lectin. Binds strongly to the oligosaccharides of ganglioside GM1b and to a lesser extent its precursor asialo-GM1. Binds weakly to asialo-GM2 oligosaccharide and to the glycan moiety of globo-series stage-specific embryonal antigen 4 (SSEA-4) hexaose. Binds galactose, N-acetylgalactose and lactose. Does not bind GM1. Does not bind to Gal-beta1,3-GalNAc (Thomsen-Friedenreich antigen), the oligosaccharide of GM1a ganglioside or SSEA-4 tetraose. Does not bind to N-glycans, O-glycans or glycosaminoglycans of glycoproteins. Does not bind Lewis glycans, derivatives of lactose or N-acetyllactosamine or blood group (ABH-type) oligosaccharides. Does not bind glucose. Has hemagglutination activity towards rabbit erythrocytes. Displays cytotoxic effects against various cultured cell lines including human breast (MCF-7), cervical (HeLa) and colon cancer (Caco2) cell lines, as well as dog kidney (MDCK) cell line that express asialo-GM1 oligosaccharide at their cell surface. Shows dose- and time-dependent activation of MKK3/6, ERK1/2 and p38 MAPK, as well as caspase-3/9 in HeLa cervical cancer cells. No cytotoxic effect on BT474 human breast cancer cell line. May be involved in recognition of glycans found on parasitic or symbiotic microorganisms. The sequence is that of GM1b/asialo-GM1 oligosaccharide-binding R-type lectin from Mytilisepta virgata (Purplish bifurcate mussel).